Reading from the N-terminus, the 490-residue chain is Hydroxysteroid dehydrogenase-like protein 2 (490 aa).

NADP(+)-binding positions include G17–G23, K42, and D74. N6-(2-hydroxyisobutyryl)lysine is present on K42. An N6-acetyllysine modification is found at K116. Y168 functions as the Proton acceptor in the catalytic mechanism. An NADP(+)-binding site is contributed by K172. Positions M282–L301 are enriched in basic and acidic residues. Residues M282–Q370 form a disordered region. Low complexity predominate over residues Q302 to P367. The 108-residue stretch at G380–N487 folds into the SCP2 domain. K390 carries the N6-succinyllysine modification.

Belongs to the short-chain dehydrogenases/reductases (SDR) family. As to expression, widely expressed.

The protein localises to the peroxisome. The protein resides in the mitochondrion. Functionally, has apparently no steroid dehydrogenase activity. Controls bile acid (BA) and lipid metabolism in response to nutritional cues. This chain is Hydroxysteroid dehydrogenase-like protein 2 (Hsdl2), found in Mus musculus (Mouse).